Here is a 348-residue protein sequence, read N- to C-terminus: MTAPSQVLKIRRPDDWHVHLRDGDMLKTVVPYTSEIYGRAIVMPNLASPITTVDAAIAYRQRILDAVPAGHDFTPLMTCYLTDSLDADELERGFHEGVFTAAKLYPANATTNSSHGVTSVDAIMPVLERMEKLGIPLLVHGEVTHADVDIFDREARFIDTVMEPLRQRLTALKVVFEHITTKDAAQYVRDGNDYLAATITPQHLMFNRNDMLVGGIRPHLYCLPILKRNIHQQALRELVASGFTRAFLGTDSAPHSRHRKETSCGCAGCFNAPSALGSYAAVFEEMNALAHFEAFCSLNGPQFYGLPMNTGWVELVRDEQQIPGNIALADDSLVPFLAGETVRWSVKK.

Zn(2+) contacts are provided by His-17 and His-19. Substrate contacts are provided by residues 19 to 21 (HLR) and Asn-45. Zn(2+)-binding residues include Lys-103, His-140, and His-178. Lys-103 carries the N6-carboxylysine modification. His-140 contributes to the substrate binding site. Position 223 (Leu-223) interacts with substrate. Residue Asp-251 coordinates Zn(2+). The active site involves Asp-251. Residues His-255 and Ala-267 each contribute to the substrate site.

Belongs to the metallo-dependent hydrolases superfamily. DHOase family. Class II DHOase subfamily. As to quaternary structure, homodimer. Zn(2+) serves as cofactor.

It catalyses the reaction (S)-dihydroorotate + H2O = N-carbamoyl-L-aspartate + H(+). It functions in the pathway pyrimidine metabolism; UMP biosynthesis via de novo pathway; (S)-dihydroorotate from bicarbonate: step 3/3. Its function is as follows. Catalyzes the reversible cyclization of carbamoyl aspartate to dihydroorotate. This Salmonella typhimurium (strain LT2 / SGSC1412 / ATCC 700720) protein is Dihydroorotase.